The primary structure comprises 200 residues: MFIGITQRLICNDSYHEKRECLALDWGKLFNKDLFKNFTPLPLSYEIDFSYYKHLIKAVILSGGNDLSFYSPNVLSKKRDLYEKQVIEICLEEKIPLLGICRGAQMIAHYFNSHISPCENHIGKHEVFFSKEKFISNSFHNFAIEKLGEDLVELCLAKDNTIEAFKHKYENIFGIMWHIERENGLNNIQILKEWFSLIKE.

Residues 20–200 (ECLALDWGKL…LKEWFSLIKE (181 aa)) enclose the Glutamine amidotransferase type-1 domain. Cys-101 functions as the Nucleophile in the catalytic mechanism. Catalysis depends on residues His-178 and Glu-180.

The catalysed reaction is N(5)-(cytidine 5'-diphosphoramidyl)-L-glutamine + H2O = cytidine 5'-diphosphoramidate + L-glutamate + H(+). It functions in the pathway capsule biogenesis; capsule polysaccharide biosynthesis. Functionally, involved in the biosynthesis of the O-methyl phosphoramidate (MeOPN) group found on the capsular polysaccharide (CPS) of C.jejuni. Catalyzes the hydrolysis of CDP-L-glutamine to L-glutamate and cytidine diphosphoramidate. The sequence is that of Gamma-glutamyl-CDP-amidate hydrolase from Campylobacter jejuni subsp. jejuni serotype O:2 (strain ATCC 700819 / NCTC 11168).